Here is an 82-residue protein sequence, read N- to C-terminus: Translational regulator CsrA (82 aa).

Belongs to the CsrA/RsmA family. In terms of assembly, homodimer; the beta-strands of each monomer intercalate to form a hydrophobic core, while the alpha-helices form wings that extend away from the core.

Its subcellular location is the cytoplasm. Its function is as follows. A translational regulator that binds mRNA to regulate translation initiation and/or mRNA stability. Usually binds in the 5'-UTR at or near the Shine-Dalgarno sequence preventing ribosome-binding, thus repressing translation. Its main target seems to be the major flagellin gene, while its function is anatagonized by FliW. The sequence is that of Translational regulator CsrA from Geobacillus kaustophilus (strain HTA426).